The following is an 87-amino-acid chain: DNA-directed RNA polymerase subunit Rpo5 (87 aa).

It belongs to the archaeal Rpo5/eukaryotic RPB5 RNA polymerase subunit family. In terms of assembly, part of the RNA polymerase complex.

It localises to the cytoplasm. The catalysed reaction is RNA(n) + a ribonucleoside 5'-triphosphate = RNA(n+1) + diphosphate. DNA-dependent RNA polymerase (RNAP) catalyzes the transcription of DNA into RNA using the four ribonucleoside triphosphates as substrates. In Thermoplasma acidophilum (strain ATCC 25905 / DSM 1728 / JCM 9062 / NBRC 15155 / AMRC-C165), this protein is DNA-directed RNA polymerase subunit Rpo5.